Here is a 388-residue protein sequence, read N- to C-terminus: Lipoyl synthase, mitochondrial (388 aa).

Residues 1 to 18 (MRLTTVQRRFLVSTKAKV) constitute a mitochondrion transit peptide. Residues 22-39 (SISSTANTGSASAGAPNG) show a composition bias toward low complexity. Residues 22-43 (SISSTANTGSASAGAPNGQTRR) form a disordered region. 7 residues coordinate [4Fe-4S] cluster: Cys-120, Cys-125, Cys-131, Cys-151, Cys-155, Cys-158, and Ser-366. Residues 134–355 (GKDKSKATAT…KDKAKEMGFL (222 aa)) enclose the Radical SAM core domain.

The protein belongs to the radical SAM superfamily. Lipoyl synthase family. Requires [4Fe-4S] cluster as cofactor.

Its subcellular location is the mitochondrion. It carries out the reaction [[Fe-S] cluster scaffold protein carrying a second [4Fe-4S](2+) cluster] + N(6)-octanoyl-L-lysyl-[protein] + 2 oxidized [2Fe-2S]-[ferredoxin] + 2 S-adenosyl-L-methionine + 4 H(+) = [[Fe-S] cluster scaffold protein] + N(6)-[(R)-dihydrolipoyl]-L-lysyl-[protein] + 4 Fe(3+) + 2 hydrogen sulfide + 2 5'-deoxyadenosine + 2 L-methionine + 2 reduced [2Fe-2S]-[ferredoxin]. The protein operates within protein modification; protein lipoylation via endogenous pathway; protein N(6)-(lipoyl)lysine from octanoyl-[acyl-carrier-protein]: step 2/2. Catalyzes the radical-mediated insertion of two sulfur atoms into the C-6 and C-8 positions of the octanoyl moiety bound to the lipoyl domains of lipoate-dependent enzymes, thereby converting the octanoylated domains into lipoylated derivatives. In Candida glabrata (strain ATCC 2001 / BCRC 20586 / JCM 3761 / NBRC 0622 / NRRL Y-65 / CBS 138) (Yeast), this protein is Lipoyl synthase, mitochondrial.